Consider the following 304-residue polypeptide: Oxygen-dependent coproporphyrinogen-III oxidase (304 aa).

S93 lines the substrate pocket. Residues H97 and H107 each coordinate a divalent metal cation. H107 acts as the Proton donor in catalysis. Residue 109 to 111 (NVR) participates in substrate binding. A divalent metal cation-binding residues include H146 and H176. The segment at 241-276 (YVEFNLVYDRGTLFGLQSGGRTESILMSLPPQVRWG) is important for dimerization. 259-261 (GGR) contributes to the substrate binding site.

This sequence belongs to the aerobic coproporphyrinogen-III oxidase family. As to quaternary structure, homodimer. The cofactor is a divalent metal cation.

It is found in the cytoplasm. It carries out the reaction coproporphyrinogen III + O2 + 2 H(+) = protoporphyrinogen IX + 2 CO2 + 2 H2O. Its pathway is porphyrin-containing compound metabolism; protoporphyrin-IX biosynthesis; protoporphyrinogen-IX from coproporphyrinogen-III (O2 route): step 1/1. In terms of biological role, involved in the heme biosynthesis. Catalyzes the aerobic oxidative decarboxylation of propionate groups of rings A and B of coproporphyrinogen-III to yield the vinyl groups in protoporphyrinogen-IX. The sequence is that of Oxygen-dependent coproporphyrinogen-III oxidase from Pseudomonas syringae pv. tomato (strain ATCC BAA-871 / DC3000).